A 277-amino-acid chain; its full sequence is Release factor glutamine methyltransferase (277 aa).

S-adenosyl-L-methionine is bound by residues 117 to 121, Asp-140, Trp-168, and Asn-182; that span reads GTGCG. 182 to 185 contacts substrate; the sequence is NPPY.

Belongs to the protein N5-glutamine methyltransferase family. PrmC subfamily.

The catalysed reaction is L-glutaminyl-[peptide chain release factor] + S-adenosyl-L-methionine = N(5)-methyl-L-glutaminyl-[peptide chain release factor] + S-adenosyl-L-homocysteine + H(+). Methylates the class 1 translation termination release factors RF1/PrfA and RF2/PrfB on the glutamine residue of the universally conserved GGQ motif. The polypeptide is Release factor glutamine methyltransferase (Buchnera aphidicola subsp. Acyrthosiphon pisum (strain APS) (Acyrthosiphon pisum symbiotic bacterium)).